We begin with the raw amino-acid sequence, 392 residues long: Formate-dependent phosphoribosylglycinamide formyltransferase (392 aa).

N(1)-(5-phospho-beta-D-ribosyl)glycinamide-binding positions include E22 to L23 and E82. ATP-binding positions include R114, K155, S160 to Q165, E195 to V198, and E203. One can recognise an ATP-grasp domain in the interval R119 to L308. Positions 267 and 279 each coordinate Mg(2+). N(1)-(5-phospho-beta-D-ribosyl)glycinamide is bound by residues D286, K355, and R362 to R363.

Belongs to the PurK/PurT family. As to quaternary structure, homodimer.

It carries out the reaction N(1)-(5-phospho-beta-D-ribosyl)glycinamide + formate + ATP = N(2)-formyl-N(1)-(5-phospho-beta-D-ribosyl)glycinamide + ADP + phosphate + H(+). The protein operates within purine metabolism; IMP biosynthesis via de novo pathway; N(2)-formyl-N(1)-(5-phospho-D-ribosyl)glycinamide from N(1)-(5-phospho-D-ribosyl)glycinamide (formate route): step 1/1. Its function is as follows. Involved in the de novo purine biosynthesis. Catalyzes the transfer of formate to 5-phospho-ribosyl-glycinamide (GAR), producing 5-phospho-ribosyl-N-formylglycinamide (FGAR). Formate is provided by PurU via hydrolysis of 10-formyl-tetrahydrofolate. This is Formate-dependent phosphoribosylglycinamide formyltransferase from Salmonella typhimurium (strain LT2 / SGSC1412 / ATCC 700720).